The primary structure comprises 170 residues: NADPH-dependent 7-cyano-7-deazaguanine reductase (170 aa).

Cys-58 acts as the Thioimide intermediate in catalysis. Asp-65 (proton donor) is an active-site residue. Substrate contacts are provided by residues 80-82 and 99-100; these read VES and HE.

Belongs to the GTP cyclohydrolase I family. QueF type 1 subfamily.

It localises to the cytoplasm. It catalyses the reaction 7-aminomethyl-7-carbaguanine + 2 NADP(+) = 7-cyano-7-deazaguanine + 2 NADPH + 3 H(+). It participates in tRNA modification; tRNA-queuosine biosynthesis. Catalyzes the NADPH-dependent reduction of 7-cyano-7-deazaguanine (preQ0) to 7-aminomethyl-7-deazaguanine (preQ1). This is NADPH-dependent 7-cyano-7-deazaguanine reductase from Bdellovibrio bacteriovorus (strain ATCC 15356 / DSM 50701 / NCIMB 9529 / HD100).